Consider the following 397-residue polypeptide: Acetate kinase (397 aa).

Mg(2+) is bound at residue Asn-8. Residue Lys-15 participates in ATP binding. Residue Arg-89 participates in substrate binding. Asp-146 serves as the catalytic Proton donor/acceptor. Residues 206 to 210, 281 to 283, and 329 to 333 each bind ATP; these read HLGNG, DLR, and GVGEN. Glu-382 is a binding site for Mg(2+).

Belongs to the acetokinase family. In terms of assembly, homodimer. Mg(2+) is required as a cofactor. Requires Mn(2+) as cofactor.

It is found in the cytoplasm. The catalysed reaction is acetate + ATP = acetyl phosphate + ADP. The protein operates within metabolic intermediate biosynthesis; acetyl-CoA biosynthesis; acetyl-CoA from acetate: step 1/2. Its function is as follows. Catalyzes the formation of acetyl phosphate from acetate and ATP. Can also catalyze the reverse reaction. The polypeptide is Acetate kinase (Bacillus anthracis).